The sequence spans 140 residues: Ribosome-binding factor A (140 aa).

Over residues 118 to 133 (DEAKQQKHNGKDKTDT) the composition is skewed to basic and acidic residues. Residues 118–140 (DEAKQQKHNGKDKTDTADSEGEE) are disordered.

Belongs to the RbfA family. In terms of assembly, monomer. Binds 30S ribosomal subunits, but not 50S ribosomal subunits or 70S ribosomes.

Its subcellular location is the cytoplasm. In terms of biological role, one of several proteins that assist in the late maturation steps of the functional core of the 30S ribosomal subunit. Associates with free 30S ribosomal subunits (but not with 30S subunits that are part of 70S ribosomes or polysomes). Required for efficient processing of 16S rRNA. May interact with the 5'-terminal helix region of 16S rRNA. In Shewanella woodyi (strain ATCC 51908 / MS32), this protein is Ribosome-binding factor A.